The sequence spans 274 residues: MLVHAHPDDESTGTGATMARYANEGATVSLVTCTSGELGEVVADDLAHLRGNPDALGEHRRGEIAEALRELGDIRHHWLGGPGRFRDSGMAGEDTNDAAECFAKADRDDVTRAMVEILRAERPHVVVTYDDTGGYGHPDHIAANHALMYALGPAADPAYLPELGEPWDVPKVYWMTLPRSFVKDVQAAGIEGFEPFTVPDEDITAVLDGRDHHAKKLAALRTYRSQVSLDDGDFFATLVQDPRFAIEHYVLVRGERGPGSGPHNWENDLFAGLD.

Residues H6, D9, and H140 each contribute to the Zn(2+) site.

This sequence belongs to the MshB deacetylase family. Zn(2+) is required as a cofactor.

The enzyme catalyses 1D-myo-inositol 2-acetamido-2-deoxy-alpha-D-glucopyranoside + H2O = 1D-myo-inositol 2-amino-2-deoxy-alpha-D-glucopyranoside + acetate. Functionally, catalyzes the deacetylation of 1D-myo-inositol 2-acetamido-2-deoxy-alpha-D-glucopyranoside (GlcNAc-Ins) in the mycothiol biosynthesis pathway. The protein is 1D-myo-inositol 2-acetamido-2-deoxy-alpha-D-glucopyranoside deacetylase 2 of Saccharopolyspora erythraea (strain ATCC 11635 / DSM 40517 / JCM 4748 / NBRC 13426 / NCIMB 8594 / NRRL 2338).